The sequence spans 1015 residues: Protein HIRA (1015 aa).

2 WD repeats span residues 11–53 (HNGK…QEDD) and 68–107 (NHLA…GPST). Ser-111 bears the Phosphoserine mark. WD repeat units follow at residues 129–168 (SHSG…EILA), 172–211 (GHSG…LETS), 220–263 (GGTT…TNMD), 266–322 (GHRK…PLVV), and 326–367 (LFDK…DPLS). The interval 408 to 431 (QQQQQLDQKNATTRETSSASSVTG) is disordered. The span at 413–431 (LDQKNATTRETSSASSVTG) shows a compositional bias: polar residues. Residues 421-479 (RETSSASSVTGVVNGESLEDIRKNLLKKQVETRTADGRRRITPLCIAQLDTGDFSTAFF) are interaction with ASF1A. Residues 421 to 727 (RETSSASSVT…RLKCNREGKE (307 aa)) are interaction with CCNA1. Positions 439-475 (EDIRKNLLKKQVETRTADGRRRITPLCIAQLDTGDFS) are required for repression of histone gene transcription. Composition is skewed to low complexity over residues 494-507 (SSPS…LDSS) and 540-556 (ATST…TTPS). Residues 494–558 (SSPSGQQLLP…PSVLTTPSKI (65 aa)) form a disordered region. At Ser-548 the chain carries Phosphoserine. The residue at position 554 (Thr-554) is a Phosphothreonine. Ser-556 carries the phosphoserine modification. Thr-575 bears the Phosphothreonine mark. Phosphoserine is present on residues Ser-583, Ser-608, Ser-609, Ser-610, Ser-612, Ser-659, and Ser-673. 2 interaction with PAX3 regions span residues 593–737 (KEQN…SRVL) and 738–826 (TAAG…SQIL). Residues 594 to 824 (EQNLVKELRS…LSGSDMTVSQ (231 aa)) are interaction with histone H2B. Residues 603–617 (SRELESSSDSDEKVH) are compositionally biased toward basic and acidic residues. The segment at 603–623 (SRELESSSDSDEKVHLAKPSS) is disordered. Residues 736–1015 (VLTAAGSCDV…QEQLDILRDK (280 aa)) are interaction with histone H4.

Belongs to the WD repeat HIR1 family. Interacts with CCNA1, HIRIP3 and NFU1/HIRIP5. Part of a complex which includes ASF1A, CABIN1, histone H3.3, histone H4 and UBN1. Interacts with histone H2B, histone H3-3B, PAX3 and PAX7. In terms of processing, sumoylated. Phosphorylated by CDK2/CCNA1 and CDK2/CCNE1 on Thr-554 in vitro. Also phosphorylated on Thr-554 in vivo. As to expression, expressed in cerebrum, cerebellum, heart, kidney, liver, lung and spleen.

Its subcellular location is the nucleus. It is found in the PML body. In terms of biological role, required for the periodic repression of histone gene transcription during the cell cycle. Cooperates with ASF1A to promote replication-independent chromatin assembly. Required for the formation of senescence-associated heterochromatin foci (SAHF) and efficient senescence-associated cell cycle exit. This chain is Protein HIRA (Hira), found in Mus musculus (Mouse).